Consider the following 69-residue polypeptide: MARPNAAEVRQLSDTDITEQINGLRRELFQLRFQQATRQLANTHRFKEVRIKLAQLMTVQSERQRSAAS.

Belongs to the universal ribosomal protein uL29 family.

This chain is Large ribosomal subunit protein uL29, found in Parasynechococcus marenigrum (strain WH8102).